The following is a 113-amino-acid chain: Nucleoid-associated protein Cthe_2143 (113 aa).

The protein belongs to the YbaB/EbfC family. Homodimer.

The protein resides in the cytoplasm. It is found in the nucleoid. In terms of biological role, binds to DNA and alters its conformation. May be involved in regulation of gene expression, nucleoid organization and DNA protection. This chain is Nucleoid-associated protein Cthe_2143, found in Acetivibrio thermocellus (strain ATCC 27405 / DSM 1237 / JCM 9322 / NBRC 103400 / NCIMB 10682 / NRRL B-4536 / VPI 7372) (Clostridium thermocellum).